The primary structure comprises 196 residues: GTP cyclohydrolase-2 (196 aa).

R49–E53 provides a ligand contact to GTP. Zn(2+) is bound by residues C54, C65, and C67. Residues Q70, E92–R94, and T114 contribute to the GTP site. D126 serves as the catalytic Proton acceptor. The active-site Nucleophile is the R128. GTP is bound by residues T149 and K154.

The protein belongs to the GTP cyclohydrolase II family. Homodimer. Requires Zn(2+) as cofactor.

It catalyses the reaction GTP + 4 H2O = 2,5-diamino-6-hydroxy-4-(5-phosphoribosylamino)-pyrimidine + formate + 2 phosphate + 3 H(+). It functions in the pathway cofactor biosynthesis; riboflavin biosynthesis; 5-amino-6-(D-ribitylamino)uracil from GTP: step 1/4. In terms of biological role, catalyzes the conversion of GTP to 2,5-diamino-6-ribosylamino-4(3H)-pyrimidinone 5'-phosphate (DARP), formate and pyrophosphate. The sequence is that of GTP cyclohydrolase-2 from Hamiltonella defensa subsp. Acyrthosiphon pisum (strain 5AT).